The sequence spans 467 residues: UDP-N-acetylmuramate--L-alanine ligase (467 aa).

ATP is bound at residue 112-118 (GTHGKTT).

The protein belongs to the MurCDEF family.

Its subcellular location is the cytoplasm. It carries out the reaction UDP-N-acetyl-alpha-D-muramate + L-alanine + ATP = UDP-N-acetyl-alpha-D-muramoyl-L-alanine + ADP + phosphate + H(+). The protein operates within cell wall biogenesis; peptidoglycan biosynthesis. Its function is as follows. Cell wall formation. The chain is UDP-N-acetylmuramate--L-alanine ligase from Paraburkholderia xenovorans (strain LB400).